Reading from the N-terminus, the 444-residue chain is 23S rRNA (uracil(1939)-C(5))-methyltransferase RlmD (444 aa).

The TRAM domain occupies 5–67 (RNRLDRTPFQ…RHFDEAKTVG (63 aa)). Cys-80, Cys-86, Cys-89, and Cys-168 together coordinate [4Fe-4S] cluster. Positions 276, 305, 310, 326, 353, and 374 each coordinate S-adenosyl-L-methionine. The Nucleophile role is filled by Cys-400.

It belongs to the class I-like SAM-binding methyltransferase superfamily. RNA M5U methyltransferase family. RlmD subfamily.

It catalyses the reaction uridine(1939) in 23S rRNA + S-adenosyl-L-methionine = 5-methyluridine(1939) in 23S rRNA + S-adenosyl-L-homocysteine + H(+). Functionally, catalyzes the formation of 5-methyl-uridine at position 1939 (m5U1939) in 23S rRNA. This is 23S rRNA (uracil(1939)-C(5))-methyltransferase RlmD from Xanthomonas axonopodis pv. citri (strain 306).